The primary structure comprises 93 residues: Putative transmembrane protein ORF25 (93 aa).

The next 3 membrane-spanning stretches (helical) occupy residues 1–21 (MAGIHVVLGLFEGALFTNVNA), 22–42 (FLVLMIILSGLIGLFSGYASI), and 60–80 (LWIFNSMLYIIMTIVFVVMSL).

It localises to the host membrane. This is Putative transmembrane protein ORF25 from His1 virus (isolate Australia/Victoria) (His1V).